The following is a 409-amino-acid chain: Arginine deiminase (409 aa).

Cys399 acts as the Amidino-cysteine intermediate in catalysis.

It belongs to the arginine deiminase family.

The protein resides in the cytoplasm. It catalyses the reaction L-arginine + H2O = L-citrulline + NH4(+). Its pathway is amino-acid degradation; L-arginine degradation via ADI pathway; carbamoyl phosphate from L-arginine: step 1/2. The chain is Arginine deiminase from Borrelia garinii subsp. bavariensis (strain ATCC BAA-2496 / DSM 23469 / PBi) (Borreliella bavariensis).